A 342-amino-acid chain; its full sequence is tRNA N6-adenosine threonylcarbamoyltransferase (342 aa).

Residues His111 and His115 each coordinate Fe cation. Residues 134–138 (LVSGG), Asp167, Gly180, and Asn272 contribute to the substrate site. Asp300 lines the Fe cation pocket.

The protein belongs to the KAE1 / TsaD family. It depends on Fe(2+) as a cofactor.

The protein localises to the cytoplasm. The enzyme catalyses L-threonylcarbamoyladenylate + adenosine(37) in tRNA = N(6)-L-threonylcarbamoyladenosine(37) in tRNA + AMP + H(+). In terms of biological role, required for the formation of a threonylcarbamoyl group on adenosine at position 37 (t(6)A37) in tRNAs that read codons beginning with adenine. Is involved in the transfer of the threonylcarbamoyl moiety of threonylcarbamoyl-AMP (TC-AMP) to the N6 group of A37, together with TsaE and TsaB. TsaD likely plays a direct catalytic role in this reaction. This Aromatoleum aromaticum (strain DSM 19018 / LMG 30748 / EbN1) (Azoarcus sp. (strain EbN1)) protein is tRNA N6-adenosine threonylcarbamoyltransferase.